Consider the following 311-residue polypeptide: Cyclin-dependent kinase B1-2 (311 aa).

The 300-residue stretch at 4–303 folds into the Protein kinase domain; it reads YEKLEKVGEG…AKAALDHPYF (300 aa). ATP is bound by residues 10–18 and K33; that span reads VGEGTYGKV. At Y15 the chain carries Phosphotyrosine. D144 (proton acceptor) is an active-site residue. T178 bears the Phosphothreonine mark.

This sequence belongs to the protein kinase superfamily. CMGC Ser/Thr protein kinase family. CDC2/CDKX subfamily. Interacts with CKS1. As to expression, expressed in flowers.

It carries out the reaction L-seryl-[protein] + ATP = O-phospho-L-seryl-[protein] + ADP + H(+). The catalysed reaction is L-threonyl-[protein] + ATP = O-phospho-L-threonyl-[protein] + ADP + H(+). It catalyses the reaction [DNA-directed RNA polymerase] + ATP = phospho-[DNA-directed RNA polymerase] + ADP + H(+). In terms of biological role, together with CDKB1-1, promotes both the last division in the stomatal cell lineage as well as the number of stomata. In collaboration with MYB124 and MYB88, restrict the G1/S transition and chloroplast and nuclear number during stomatal formation, and normally maintain fate and developmental progression throughout the stomatal cell lineage. The sequence is that of Cyclin-dependent kinase B1-2 (CDKB1-2) from Arabidopsis thaliana (Mouse-ear cress).